The sequence spans 133 residues: Phosphoribosyl-AMP cyclohydrolase (133 aa).

Residue D90 coordinates Mg(2+). Position 91 (C91) interacts with Zn(2+). Residues D92 and D94 each contribute to the Mg(2+) site. Zn(2+) is bound by residues C107 and C114.

Belongs to the PRA-CH family. Homodimer. The cofactor is Mg(2+). Zn(2+) serves as cofactor.

It localises to the cytoplasm. The catalysed reaction is 1-(5-phospho-beta-D-ribosyl)-5'-AMP + H2O = 1-(5-phospho-beta-D-ribosyl)-5-[(5-phospho-beta-D-ribosylamino)methylideneamino]imidazole-4-carboxamide. It participates in amino-acid biosynthesis; L-histidine biosynthesis; L-histidine from 5-phospho-alpha-D-ribose 1-diphosphate: step 3/9. Catalyzes the hydrolysis of the adenine ring of phosphoribosyl-AMP. This chain is Phosphoribosyl-AMP cyclohydrolase, found in Streptomyces avermitilis (strain ATCC 31267 / DSM 46492 / JCM 5070 / NBRC 14893 / NCIMB 12804 / NRRL 8165 / MA-4680).